Consider the following 295-residue polypeptide: Protoheme IX farnesyltransferase (295 aa).

Transmembrane regions (helical) follow at residues 27 to 47, 48 to 68, 94 to 114, 117 to 137, 144 to 164, 171 to 191, 216 to 236, 241 to 261, and 272 to 292; these read LVVFTAIAGMVAAPGSIHPFL, ALISLMCIALGSGSAGAINMW, SALEFGITIGILSVFIMAIAV, ISAALLAVSILFYVFVYTIWL, NIVIGGAAGAFPPMIGWAVVT, SFILFLIIFMWTPPHFWALSL, KHILIYSILLVLTSLLPALFL, FYLSMAIIEGCVFIWFAISVI, and MFSYSISYLFSLFASIIFCSI.

Belongs to the UbiA prenyltransferase family. Protoheme IX farnesyltransferase subfamily.

Its subcellular location is the cell membrane. The enzyme catalyses heme b + (2E,6E)-farnesyl diphosphate + H2O = Fe(II)-heme o + diphosphate. It functions in the pathway porphyrin-containing compound metabolism; heme O biosynthesis; heme O from protoheme: step 1/1. Its function is as follows. Converts heme B (protoheme IX) to heme O by substitution of the vinyl group on carbon 2 of heme B porphyrin ring with a hydroxyethyl farnesyl side group. In Wolbachia pipientis subsp. Culex pipiens (strain wPip), this protein is Protoheme IX farnesyltransferase.